The primary structure comprises 257 residues: Type III pantothenate kinase (257 aa).

Residue 5–12 (DIGNTNIK) participates in ATP binding. 107–110 (GSDR) contributes to the substrate binding site. Residue aspartate 109 is the Proton acceptor of the active site. Threonine 133 lines the ATP pocket.

Belongs to the type III pantothenate kinase family. Homodimer. Requires NH4(+) as cofactor. K(+) is required as a cofactor.

The protein resides in the cytoplasm. It carries out the reaction (R)-pantothenate + ATP = (R)-4'-phosphopantothenate + ADP + H(+). Its pathway is cofactor biosynthesis; coenzyme A biosynthesis; CoA from (R)-pantothenate: step 1/5. Catalyzes the phosphorylation of pantothenate (Pan), the first step in CoA biosynthesis. The sequence is that of Type III pantothenate kinase from Ehrlichia ruminantium (strain Welgevonden).